A 76-amino-acid chain; its full sequence is Omega-conotoxin-like TxMKLT1-0141 (76 aa).

Positions 1–22 are cleaved as a signal peptide; sequence MKLTCMMIVAVLFLTAWTFATA. The propeptide occupies 23–50; the sequence is DDSSNGLENLFPKAHHEMKNPEASKLNE. Disulfide bonds link Cys-52–Cys-67, Cys-59–Cys-70, and Cys-66–Cys-75.

The protein belongs to the conotoxin O1 superfamily. As to expression, expressed by the venom duct.

Its subcellular location is the secreted. Functionally, omega-conotoxins act at presynaptic membranes, they bind and block voltage-gated calcium channels (Cav). This is Omega-conotoxin-like TxMKLT1-0141 from Conus textile (Cloth-of-gold cone).